Consider the following 335-residue polypeptide: UDP-N-acetylglucosamine--N-acetylmuramyl-(pentapeptide) pyrophosphoryl-undecaprenol N-acetylglucosamine transferase (335 aa).

UDP-N-acetyl-alpha-D-glucosamine is bound by residues Thr9–Gly11, Asn123, Ser176, and Gln274.

Belongs to the glycosyltransferase 28 family. MurG subfamily.

It is found in the cell inner membrane. It carries out the reaction di-trans,octa-cis-undecaprenyl diphospho-N-acetyl-alpha-D-muramoyl-L-alanyl-D-glutamyl-meso-2,6-diaminopimeloyl-D-alanyl-D-alanine + UDP-N-acetyl-alpha-D-glucosamine = di-trans,octa-cis-undecaprenyl diphospho-[N-acetyl-alpha-D-glucosaminyl-(1-&gt;4)]-N-acetyl-alpha-D-muramoyl-L-alanyl-D-glutamyl-meso-2,6-diaminopimeloyl-D-alanyl-D-alanine + UDP + H(+). Its pathway is cell wall biogenesis; peptidoglycan biosynthesis. Its function is as follows. Cell wall formation. Catalyzes the transfer of a GlcNAc subunit on undecaprenyl-pyrophosphoryl-MurNAc-pentapeptide (lipid intermediate I) to form undecaprenyl-pyrophosphoryl-MurNAc-(pentapeptide)GlcNAc (lipid intermediate II). The protein is UDP-N-acetylglucosamine--N-acetylmuramyl-(pentapeptide) pyrophosphoryl-undecaprenol N-acetylglucosamine transferase of Campylobacter fetus subsp. fetus (strain 82-40).